Consider the following 324-residue polypeptide: Fructose-1,6-bisphosphatase class 1 (324 aa).

Residues E88, D107, L109, and D110 each coordinate Mg(2+). Residues 110–113, N199, and K265 each bind substrate; that span reads DGSS. Position 271 (E271) interacts with Mg(2+).

Belongs to the FBPase class 1 family. Homotetramer. The cofactor is Mg(2+).

The protein resides in the cytoplasm. It catalyses the reaction beta-D-fructose 1,6-bisphosphate + H2O = beta-D-fructose 6-phosphate + phosphate. Its pathway is carbohydrate biosynthesis; gluconeogenesis. The sequence is that of Fructose-1,6-bisphosphatase class 1 from Neisseria gonorrhoeae (strain ATCC 700825 / FA 1090).